The chain runs to 621 residues: Endoglucanase 25 (621 aa).

The interval 1 to 26 (MYGRDPWGGPLEINTADSATDDDRSR) is disordered. At 1 to 70 (MYGRDPWGGP…DLGCIIVSRK (70 aa)) the chain is on the cytoplasmic side. The interval 48 to 49 (LL) is polarized targeting signal 1 (PTS1). The tract at residues 59-62 (YVDL) is polarized targeting signal 2 (PTS2). A helical; Signal-anchor for type II membrane protein membrane pass occupies residues 71-91 (IFVWTVGTLVAAALLAGFITL). The Extracellular portion of the chain corresponds to 92-621 (IVKTVPRHHP…PPPPPAPWKP (530 aa)). N-linked (GlcNAc...) asparagine glycans are attached at residues Asn108 and Asn133. The Nucleophile role is filled by Asp165. 5 N-linked (GlcNAc...) asparagine glycosylation sites follow: Asn216, Asn324, Asn345, Asn408, and Asn425. Catalysis depends on residues His513 and Asp561. Asn567 carries an N-linked (GlcNAc...) asparagine glycan. Residue Glu570 is part of the active site.

This sequence belongs to the glycosyl hydrolase 9 (cellulase E) family. Glycosylated. N-glycosylation of KOR in the endoplasmic reticulum followed by N-glycan modifications in the Golgi are essential for catalytic activity. Highly expressed in roots and stems, at intermediate levels in leaves and flowers, and at lower levels in siliques. Expressed in xylem (at protein level).

It localises to the cell membrane. The enzyme catalyses Endohydrolysis of (1-&gt;4)-beta-D-glucosidic linkages in cellulose, lichenin and cereal beta-D-glucans.. Its function is as follows. Required for cellulose microfibril formation. Involved in cell wall assembly during cell elongation and cell plate maturation in cytokinesis. Required for secondary cell wall formation in the developing xylem. May cycle through different intracellular compartments, including plasma membrane. This is Endoglucanase 25 (KOR) from Arabidopsis thaliana (Mouse-ear cress).